The primary structure comprises 518 residues: Membrane-bound lytic murein transglycosylase F (518 aa).

The first 21 residues, 1–21 (MKKLKINYLFIGILALLLAVA), serve as a signal peptide directing secretion. The tract at residues 22 to 269 (LWPSIPWFGK…RIEEKYLGHG (248 aa)) is non-LT domain. The tract at residues 270–518 (DDFDYVDTRT…SRKGSEEKQN (249 aa)) is LT domain. E314 is an active-site residue.

It in the N-terminal section; belongs to the bacterial solute-binding protein 3 family. This sequence in the C-terminal section; belongs to the transglycosylase Slt family.

It localises to the cell outer membrane. The enzyme catalyses Exolytic cleavage of the (1-&gt;4)-beta-glycosidic linkage between N-acetylmuramic acid (MurNAc) and N-acetylglucosamine (GlcNAc) residues in peptidoglycan, from either the reducing or the non-reducing ends of the peptidoglycan chains, with concomitant formation of a 1,6-anhydrobond in the MurNAc residue.. Murein-degrading enzyme that degrades murein glycan strands and insoluble, high-molecular weight murein sacculi, with the concomitant formation of a 1,6-anhydromuramoyl product. Lytic transglycosylases (LTs) play an integral role in the metabolism of the peptidoglycan (PG) sacculus. Their lytic action creates space within the PG sacculus to allow for its expansion as well as for the insertion of various structures such as secretion systems and flagella. The polypeptide is Membrane-bound lytic murein transglycosylase F (Escherichia coli (strain SMS-3-5 / SECEC)).